A 117-amino-acid polypeptide reads, in one-letter code: cAMP-regulated phosphoprotein 19-A (117 aa).

The segment covering M1–L37 has biased composition (basic and acidic residues). Residues M1–L54 are disordered. S28 carries the phosphoserine; by CDK2 modification. Phosphoserine; by GWL is present on S67. The segment at K78–G117 is disordered. At T99 the chain carries Phosphothreonine; by CDK2. S109 carries the phosphoserine; by PKA modification.

This sequence belongs to the endosulfine family. As to quaternary structure, interacts (when phosphorylated at Ser-67) with ppp2r2d. Post-translationally, phosphorylation at Ser-67 by gwl during mitosis is essential for interaction with ppp2r2d (PR55-delta) and subsequent inactivation of PP2A. Phosphorylated by PKA.

The protein resides in the cytoplasm. Its function is as follows. Protein phosphatase inhibitor that specifically inhibits protein phosphatase 2A (PP2A) during mitosis. When phosphorylated at Ser-67 during mitosis, specifically interacts with ppp2r2d (PR55-delta) and inhibits its activity, leading to inactivation of PP2A, an essential condition to keep cyclin-B1-CDK1 activity high during M phase. This is cAMP-regulated phosphoprotein 19-A (arpp19-a) from Xenopus laevis (African clawed frog).